The following is a 356-amino-acid chain: MPLFKRRDVNTPAPTSSIREKYDFRDVLGTGAFSKVFLAESKTDVGQLYAVKCIDKKALKGKEESLENEIKVLRKLRHNNIVQLFETYDEKQFVYLVMELVTGGELFDRIVAKGSYTEQDASNLIRQVLEAVSFMHDNGVVHRDLKPENLLYYNQDEDSKIMISDFGLSKTEDSGVMATACGTPGYVAPEVLQQKPYGKAVDVWSIGVIAYILLCGYPPFYDESDANLFAQIIKGEYEFDAPYWDQISDSAKDFISHLMCCDPEMRFTCQSALEHPWISGNTAYTHDIHRTVAVHLKKSLAKRNWKKAFNAAAAIRQLQLLRLSPIATAFRNKRPNSNQRLQLPNVLVFQYFCKIP.

The Nuclear localization signal motif lies at 2 to 7; it reads PLFKRR. Positions 22-278 constitute a Protein kinase domain; it reads YDFRDVLGTG…CQSALEHPWI (257 aa). Residues 28–36 and Lys52 each bind ATP; that span reads LGTGAFSKV. The Proton acceptor role is filled by Asp144. Position 179 is a phosphothreonine; by ckk-1 (Thr179). Residues 278–318 form an autoinhibitory domain region; it reads ISGNTAYTHDIHRTVAVHLKKSLAKRNWKKAFNAAAAIRQL. Positions 298 to 319 are calmodulin-binding; sequence KSLAKRNWKKAFNAAAAIRQLQ.

The protein belongs to the protein kinase superfamily. CAMK Ser/Thr protein kinase family. CaMK subfamily. Requires Mg(2+) as cofactor.

The protein resides in the nucleus. It localises to the cytoplasm. The catalysed reaction is L-seryl-[protein] + ATP = O-phospho-L-seryl-[protein] + ADP + H(+). It catalyses the reaction L-threonyl-[protein] + ATP = O-phospho-L-threonyl-[protein] + ADP + H(+). Activated by Ca(2+)/calmodulin. Binding of calmodulin results in a conformational change that generates functional binding sites for both substrate and ATP, and thus relieves autoinhibition and lowers the Km of substrate binding. Must be phosphorylated by ckk-1 to be maximally active but this does not appear to be required for activity in AFD neurons. Functionally, calcium/calmodulin-dependent protein kinase that operates in the calcium-triggered CaMKK-CaMK1 signaling cascade which results in transcriptional activation. Transcriptional activation occurs at least in part through phosphorylation of crh-1. Regulates gene expression, sensory morphology, and function of the AFD thermosensory neurons. Involved in long-term adaptation of AFD neurons to temperatures warmer than the initial acclimatized cultivation temperature. Acts in the FLP thermal nociceptors to moderate the responsiveness to noxious heat and controls neuropeptide release from FLP neurons in response to temperature elevations. Regulates the dauer decision, the decision of the larvae to enter into the alternative stress-resistant and long-lived dauer developmental stage, based on the feeding state, primarily in the AWC sensory neurons. Acts non cell-autonomously in the AWC neurons to regulate expression of the daf-28 insulin-like peptide and cell-autonomously in the ASI sensory neurons to regulate expression of the growth promoting daf-7 in a food-regulated manner. Plays a role in memory-based thermal response of an individual AFD neuron cell. Involved in chemotaxis response in AWC neurons to attractant 2-heptanone, a volatile organic compound emitted by the nematode pathogenic bacterium B.nematocida B16. Represses transcription of glutamate receptor glr-1 in the nucleus basally and in response to change in synaptic activity. This Caenorhabditis briggsae protein is Calcium/calmodulin-dependent protein kinase type 1 (cmk-1).